The chain runs to 210 residues: Large ribosomal subunit protein bL9 (210 aa).

The segment at 172–210 (EAAAAALEPDSEEEFEAATPPSELAAEASDEDADDAKEA) is disordered. Acidic residues predominate over residues 199-210 (ASDEDADDAKEA).

The protein belongs to the bacterial ribosomal protein bL9 family.

In terms of biological role, binds to the 23S rRNA. This chain is Large ribosomal subunit protein bL9, found in Sphingopyxis alaskensis (strain DSM 13593 / LMG 18877 / RB2256) (Sphingomonas alaskensis).